We begin with the raw amino-acid sequence, 286 residues long: 4-diphosphocytidyl-2-C-methyl-D-erythritol kinase (286 aa).

K12 is a catalytic residue. ATP is bound at residue 96-106 (PHGAGLGGGSA). The active site involves D138.

The protein belongs to the GHMP kinase family. IspE subfamily.

The catalysed reaction is 4-CDP-2-C-methyl-D-erythritol + ATP = 4-CDP-2-C-methyl-D-erythritol 2-phosphate + ADP + H(+). The protein operates within isoprenoid biosynthesis; isopentenyl diphosphate biosynthesis via DXP pathway; isopentenyl diphosphate from 1-deoxy-D-xylulose 5-phosphate: step 3/6. Functionally, catalyzes the phosphorylation of the position 2 hydroxy group of 4-diphosphocytidyl-2C-methyl-D-erythritol. This chain is 4-diphosphocytidyl-2-C-methyl-D-erythritol kinase, found in Nitratidesulfovibrio vulgaris (strain DP4) (Desulfovibrio vulgaris).